We begin with the raw amino-acid sequence, 217 residues long: Killer cell lectin-like receptor subfamily B member 1F (217 aa).

Topologically, residues M1–C45 are cytoplasmic. Positions C31 to P34 match the LCK-binding motif motif. Residues A46–V66 traverse the membrane as a helical; Signal-anchor for type II membrane protein segment. The Extracellular portion of the chain corresponds to Q67–V217. The C-type lectin domain occupies H101 to Q211. Disulfide bonds link C122–C210 and C189–C202.

As to expression, expressed in natural killer cells and a subset of T-cells.

It localises to the membrane. Functionally, binds CLEC2I/Clr-g leading to activation of natural killer cells or stimulation of IL-2 production and proliferation of T-cells in response to antigen stimulation. May contribute to the formation of the immunological synapse between T-cells and antigen-presenting dendritic cells. The sequence is that of Killer cell lectin-like receptor subfamily B member 1F from Rattus norvegicus (Rat).